The sequence spans 445 residues: tRNA modification GTPase MnmE (445 aa).

Residues Arg20, Glu79, and Lys119 each contribute to the (6S)-5-formyl-5,6,7,8-tetrahydrofolate site. The TrmE-type G domain occupies 215 to 371; that stretch reads GLKLAIIGPP…ILKNIENIAE (157 aa). Residue Asn225 participates in K(+) binding. GTP is bound by residues 225–230, 244–250, and 269–272; these read NTGKSS, SNIAGTT, and DTAG. Ser229 contributes to the Mg(2+) binding site. K(+) is bound by residues Ser244, Ile246, and Thr249. Thr250 serves as a coordination point for Mg(2+). A (6S)-5-formyl-5,6,7,8-tetrahydrofolate-binding site is contributed by Lys445.

The protein belongs to the TRAFAC class TrmE-Era-EngA-EngB-Septin-like GTPase superfamily. TrmE GTPase family. In terms of assembly, homodimer. Heterotetramer of two MnmE and two MnmG subunits. Requires K(+) as cofactor.

The protein resides in the cytoplasm. In terms of biological role, exhibits a very high intrinsic GTPase hydrolysis rate. Involved in the addition of a carboxymethylaminomethyl (cmnm) group at the wobble position (U34) of certain tRNAs, forming tRNA-cmnm(5)s(2)U34. This chain is tRNA modification GTPase MnmE, found in Rickettsia prowazekii (strain Madrid E).